A 747-amino-acid polypeptide reads, in one-letter code: Plakophilin-1 (747 aa).

Residues 1-234 (MNHSPLKTAL…SFGHSRASSK (234 aa)) are required for binding to single stranded DNA. Residues 1-286 (MNHSPLKTAL…ESAKQQVYQL (286 aa)) are required for interaction with EIF4A1. Residue S4 is modified to Phosphoserine. The disordered stretch occupies residues 48–68 (TVKRQKSKSSQSSTLSHSNRG). Phosphorylation in this region is required for cytoplasmic localization and protein stabilization stretches follow at residues 54 to 69 (SKSSQSSTLSHSNRGS) and 116 to 191 (RFSS…STCS). S118 carries the post-translational modification Phosphoserine; by PKB/AKT2. Phosphoserine occurs at positions 119, 121, and 142. Positions 160-269 (YCDPRGTLRK…KYQAIGAYYI (110 aa)) are required for WNT-mediated nuclear localization. 9 ARM repeats span residues 243-274 (SGLTIPKAVQYLSSQDEKYQAIGAYYIQHTCF), 275-316 (QDES…NLVF), 317-359 (RSTT…NLSS), 360-415 (TDEL…KRLG), 416-463 (MREL…NCVA), 525-556 (NYDCPLPEEETNPKGSGWLYHSDAIRTYLNLM), 557-603 (GKSK…IARL), 604-649 (LQSG…SHTG), and 650-713 (NTSN…DMWS).

The protein belongs to the beta-catenin family. Part of a complex that contains DSG3, PKP1, YAP1 and YWHAG; the complex is required for localization of DSG3 and YAP1 to the cell membrane in keratinocytes. Interacts with DSP. Interacts (via N-terminus) with KRT5/CK5, KRT8/CK8 (via rod domain), KRT15/CK15 and KRT18/CK18 (via rod domain) as part of intermediate filaments. Interacts with VIM (via rod domain). Interacts with DSP. Interacts with DES. Interacts with FXR1; the interaction may facilitate the binding of PKP1 to PKP2, PKP3 and DSP mRNA. Interacts (via N-terminus) with EIF4A1; the interaction promotes EIF4A1 recruitment to the cap-dependent translation complex and EIF4A1 ATPase activity. Interacts with TJP1/ZO-1; the interaction facilitates TJP1/ZO-1 localization to the plasma membrane. Interacts (when phosphorylated) with YWHAG; the interaction results in translocation of PKP1 to the cytoplasm and loss of intercellular adhesion in keratinocytes. In terms of processing, phosphorylated by AKT2; required for interaction with YWHAG and subsequent localization away from desmosomes to the cytoplasm. Phosphorylation of Ser-118 by AKT2 promotes PKP1-driven cap-dependent mRNA translation and decreases intercellular adhesion, phosphorylation is promoted by insulin. Phosphorylation by RIPK4 at the N-terminus is required for its role in differentiation of keratinocytes and DSG1 localization at cell junctions. Expressed in stratified squamous, complex, glandular duct and bladder epithelia (at protein level). As to expression, widely expressed (at protein level).

Its subcellular location is the cell junction. The protein localises to the desmosome. It localises to the nucleus. The protein resides in the cytoplasm. It is found in the perinuclear region. Its subcellular location is the cell membrane. The protein localises to the stress granule. Functionally, a component of desmosome cell-cell junctions which are required for positive regulation of cellular adhesion. Plays a role in desmosome protein expression regulation and localization to the desmosomal plaque, thereby maintaining cell sheet integrity and anchorage of desmosomes to intermediate filaments. Required for localization of DSG3 and YAP1 to the cell membrane in keratinocytes in response to mechanical strain, via the formation of an interaction complex composed of DSG3, YAP1, PKP1 and YWHAG. Positively regulates differentiation of keratinocytes, potentially via promoting localization of DSG1 at desmosome cell junctions. Required for calcium-independent development and maturation of desmosome plaques specifically at lateral cell-cell contacts in differentiating keratinocytes. Plays a role in the maintenance of DSG3 protein abundance, DSG3 clustering and localization of these clusters to the cell membrane in keratinocytes. May also promote keratinocyte proliferation and morphogenesis during postnatal development. Required for tight junction inside-out transepidermal barrier function of the skin. Promotes Wnt-mediated proliferation and differentiation of ameloblasts, via facilitating TJP1/ZO-1 localization to tight junctions. Binds single-stranded DNA (ssDNA), and may thereby play a role in sensing DNA damage and promoting cell survival. Positively regulates cap-dependent translation and as a result cell proliferation, via recruitment of EIF4A1 to the initiation complex and promotion of EIF4A1 ATPase activity. Regulates the mRNA stability and protein abundance of desmosome components PKP2, PKP3, DSC2 and DSP, potentially via its interaction with FXR1. This chain is Plakophilin-1 (PKP1), found in Homo sapiens (Human).